The primary structure comprises 319 residues: Glutamyl-Q tRNA(Asp) synthetase (319 aa).

Residues 23–27 (RFAPS) and Glu59 contribute to the L-glutamate site. A 'HIGH' region motif is present at residues 26-36 (PSPSGPLHAGS). The Zn(2+) site is built by Cys115, Cys117, Tyr139, and Cys143. Positions 197 and 215 each coordinate L-glutamate. A 'KMSKS' region motif is present at residues 254-258 (KLSKQ). Residue Lys257 coordinates ATP.

This sequence belongs to the class-I aminoacyl-tRNA synthetase family. GluQ subfamily. Requires Zn(2+) as cofactor.

Catalyzes the tRNA-independent activation of glutamate in presence of ATP and the subsequent transfer of glutamate onto a tRNA(Asp). Glutamate is transferred on the 2-amino-5-(4,5-dihydroxy-2-cyclopenten-1-yl) moiety of the queuosine in the wobble position of the QUC anticodon. The sequence is that of Glutamyl-Q tRNA(Asp) synthetase from Bordetella bronchiseptica (strain ATCC BAA-588 / NCTC 13252 / RB50) (Alcaligenes bronchisepticus).